The primary structure comprises 288 residues: Mortality factor 4-like protein 2 (288 aa).

The segment covering M1–S15 has biased composition (polar residues). A disordered region spans residues M1 to E113. S71 is subject to Phosphoserine. The MRG domain occupies N117–L288.

In terms of assembly, component of the NuA4 histone acetyltransferase complex which contains the catalytic subunit KAT5/TIP60 and the subunits EP400, TRRAP/PAF400, BRD8/SMAP, EPC1, DMAP1/DNMAP1, RUVBL1/TIP49, RUVBL2, ING3, actin, ACTL6A/BAF53A, MORF4L1/MRG15, MORF4L2/MRGX, MRGBP, YEATS4/GAS41 and VPS72/YL1. The NuA4 complex interacts with MYC and the adenovirus E1A protein. MORF4L1 may also participate in the formation of NuA4 related complexes which lack the KAT5/TIP60 catalytic subunit, but which include the SWI/SNF related protein SRCAP. Component of the MSIN3A histone deacetylase complex, which includes SIN3A, HDAC2, ARID4B, MORF4L1, RBBP4/RbAp48, and RBBP7/RbAp46. Interacts with MRFAP1 and RB1. May also interact with one or more as yet undefined members of the TLE (transducin-like enhancer of split) family of transcriptional repressors.

It is found in the nucleus. In terms of biological role, component of the NuA4 histone acetyltransferase complex which is involved in transcriptional activation of select genes principally by acetylation of nucleosomal histone H4 and H2A. This modification may both alter nucleosome - DNA interactions and promote interaction of the modified histones with other proteins which positively regulate transcription. This complex may be required for the activation of transcriptional programs associated with oncogene and proto-oncogene mediated growth induction, tumor suppressor mediated growth arrest and replicative senescence, apoptosis, and DNA repair. The NuA4 complex ATPase and helicase activities seem to be, at least in part, contributed by the association of RUVBL1 and RUVBL2 with EP400. NuA4 may also play a direct role in DNA repair when directly recruited to sites of DNA damage. Also a component of the MSIN3A complex which acts to repress transcription by deacetylation of nucleosomal histones. The polypeptide is Mortality factor 4-like protein 2 (MORF4L2) (Homo sapiens (Human)).